Consider the following 346-residue polypeptide: Eukaryotic translation initiation factor 3 subunit I (346 aa).

5 WD repeats span residues G8 to H49, G50 to D91, C145 to N184, E189 to T228, and G286 to M325.

It belongs to the eIF-3 subunit I family. Component of the eukaryotic translation initiation factor 3 (eIF-3) complex.

Its subcellular location is the cytoplasm. Component of the eukaryotic translation initiation factor 3 (eIF-3) complex, which is involved in protein synthesis of a specialized repertoire of mRNAs and, together with other initiation factors, stimulates binding of mRNA and methionyl-tRNAi to the 40S ribosome. The eIF-3 complex specifically targets and initiates translation of a subset of mRNAs involved in cell proliferation. This is Eukaryotic translation initiation factor 3 subunit I (tif-34) from Neurospora crassa (strain ATCC 24698 / 74-OR23-1A / CBS 708.71 / DSM 1257 / FGSC 987).